Reading from the N-terminus, the 180-residue chain is Cytidylate kinase (180 aa).

ATP is bound at residue 7-15 (GPPGSGKST).

The protein belongs to the cytidylate kinase family. Type 2 subfamily.

It localises to the cytoplasm. It carries out the reaction CMP + ATP = CDP + ADP. The catalysed reaction is dCMP + ATP = dCDP + ADP. The sequence is that of Cytidylate kinase from Sulfurisphaera tokodaii (strain DSM 16993 / JCM 10545 / NBRC 100140 / 7) (Sulfolobus tokodaii).